The chain runs to 156 residues: Translation initiation factor IF-1, chloroplastic (156 aa).

The interval 1–35 is disordered; sequence MAASLTLMTSPPCSRSSKSPSPSPSPSLSCNQQQQ. The N-terminal 49 residues, 1 to 49, are a transit peptide targeting the chloroplast; that stretch reads MAASLTLMTSPPCSRSSKSPSPSPSPSLSCNQQQQYKPLLHHQWPPQIS. The segment covering 10 to 20 has biased composition (low complexity); sequence SPPCSRSSKSP. The region spanning 72–148 is the S1-like domain; that stretch reads GGSPSVQEQK…TRGRITYRLR (77 aa).

This sequence belongs to the IF-1 family. In terms of assembly, component of the 30S ribosomal translation pre-initiation complex which assembles on the 30S ribosome in the order IF-2 and IF-3, IF-1 and N-formylmethionyl-tRNA(fMet); mRNA recruitment can occur at any time during PIC assembly.

It localises to the plastid. The protein localises to the chloroplast. Functionally, one of the essential components for the initiation of protein synthesis. Stabilizes the binding of IF-2 and IF-3 on the 30S subunit to which N-formylmethionyl-tRNA(fMet) subsequently binds. Helps modulate mRNA selection, yielding the 30S pre-initiation complex (PIC). Upon addition of the 50S ribosomal subunit IF-1, IF-2 and IF-3 are released leaving the mature 70S translation initiation complex. The protein is Translation initiation factor IF-1, chloroplastic (infA) of Mesembryanthemum crystallinum (Common ice plant).